Consider the following 396-residue polypeptide: uncharacterized protein (396 aa).

A run of 2 helical transmembrane segments spans residues 27 to 47 and 69 to 89; these read LLIA…QICL and FIVL…NVTF. Positions 117-122 match the HXXXXD motif motif; the sequence is HQMYAD. 2 helical membrane passes run 123–143 and 372–392; these read WIYL…YIIL and LTPR…VFVM.

Belongs to the 1-acyl-sn-glycerol-3-phosphate acyltransferase family.

It localises to the membrane. This is an uncharacterized protein from Saccharomyces cerevisiae (strain ATCC 204508 / S288c) (Baker's yeast).